The chain runs to 183 residues: Translation initiation factor IF-3 (183 aa).

This sequence belongs to the IF-3 family. In terms of assembly, monomer.

It localises to the cytoplasm. Functionally, IF-3 binds to the 30S ribosomal subunit and shifts the equilibrium between 70S ribosomes and their 50S and 30S subunits in favor of the free subunits, thus enhancing the availability of 30S subunits on which protein synthesis initiation begins. The protein is Translation initiation factor IF-3 of Azobacteroides pseudotrichonymphae genomovar. CFP2.